Consider the following 565-residue polypeptide: Adenine deaminase 1 (565 aa).

It belongs to the metallo-dependent hydrolases superfamily. Adenine deaminase family. It depends on Mn(2+) as a cofactor.

It carries out the reaction adenine + H2O + H(+) = hypoxanthine + NH4(+). The chain is Adenine deaminase 1 from Rhizobium etli (strain ATCC 51251 / DSM 11541 / JCM 21823 / NBRC 15573 / CFN 42).